The sequence spans 148 residues: Putative nickel-responsive regulator (148 aa).

Residues histidine 88, histidine 99, histidine 101, and cysteine 107 each coordinate Ni(2+).

This sequence belongs to the transcriptional regulatory CopG/NikR family. Ni(2+) is required as a cofactor.

Functionally, transcriptional regulator. The sequence is that of Putative nickel-responsive regulator from Helicobacter pylori (strain G27).